Here is a 638-residue protein sequence, read N- to C-terminus: ATP-dependent zinc metalloprotease FtsH (638 aa).

Residues M1–K15 are Cytoplasmic-facing. A helical membrane pass occupies residues P16–M36. The Periplasmic segment spans residues R37–N122. A helical membrane pass occupies residues F123–F143. The Cytoplasmic segment spans residues M144–S638. G216–T223 lines the ATP pocket. H440 contacts Zn(2+). E441 is a catalytic residue. Zn(2+)-binding residues include H444 and D517.

It in the central section; belongs to the AAA ATPase family. This sequence in the C-terminal section; belongs to the peptidase M41 family. Homohexamer. The cofactor is Zn(2+).

The protein resides in the cell inner membrane. Functionally, acts as a processive, ATP-dependent zinc metallopeptidase for both cytoplasmic and membrane proteins. Plays a role in the quality control of integral membrane proteins. The protein is ATP-dependent zinc metalloprotease FtsH of Helicobacter felis (strain ATCC 49179 / CCUG 28539 / NCTC 12436 / CS1).